The following is an 858-amino-acid chain: MDTSSAAGSGAGTGDVCPCSTVATSTTSASNEQPQTKRQKIEQQIKVGSKALPPQPPHPPDILDLDANSNSHLCSSLSSSSSHSLSTPSTANNSPTTTPCSSRAASYAQLLHNILPQNGDTDLHSQPESAHDEVDRAAKLPNLLTLDTTNGNGSHASSRSNCLQATTATSIDDMLEFEQSLTRQCLCGVSERTLRKPFQSHYSQDTNGQKRIAYLREWPTNKLLQFLSNLQLLFDIYLKQNAKGFICTRIMDVCDALIRNDHKLIDEIIVLAGYENSYVQFLAGRVLAAFLVIAKQELNDEWLQKIVDQLFNFEQLDQAAVQKIHFSLDIIKRIVEWKDMEIHPLDDDWMASANSTSAASSVVPLSTEASVSYMHFPVQEQPLATNYFALQFREDTEGERETGQEAPDNRDRHRRHFGEDMNVAYEPHPAPQSTTMPSGCHVVTLTDSESFDTTHLKCITIQKLEHKWPTLVKNMSELMAPTHQDAAEHCVLNFLQLWENIISVKANLSIDETRPYYAQLDKFELLLSHSLSCTVYKQMLCLFNEALCYGSTLALQDMLPEETCKLAHQIVCHVRGFRILESLPRRQPDNMVSLIGYNGKPMVYANGTITLAHAAQSGDSEEDGAPLDLIEMDKTLLQKMVLLVLKSIAVTVKEIRSDSSDSSIDSTDYDAFQDMMLIERSIRDVLSKLETFIKQTLEFHPECHFSKILIHLFDDQDDHLIEAMVCTLDVTSGISFRNNAFPELVAMLNPVYTFLEFLKMTSNSSDLLLDLLVSNETCFLLYLLRLLKYIRMNWTMFVHSCHTFGMGSAMLDEAMGVLIRLRLQISRLVSRQLYPYDISPVLRLLESCESLYEGNELS.

The disordered stretch occupies residues 1–102 (MDTSSAAGSG…NSPTTTPCSS (102 aa)). Composition is skewed to low complexity over residues 20–30 (STVATSTTSAS) and 65–102 (LDAN…PCSS).

Belongs to the protein lines family. As to quaternary structure, interacts with drm. In terms of tissue distribution, expressed throughout the embryo, including the hindgut, posterior midgut and embryonic epidermis.

Its subcellular location is the cytoplasm. It is found in the nucleus. Its function is as follows. Has a dual role as a segment polarity protein and as a modulator of the Abd-B protein. Required for Abd-B to activate the transcription of genes (including ems, cut and sal) that are involved in posterior spiracle morphogenesis. Also required for Abd-B to form an eighth abdominal denticle belt. Acts in a hierarchy downstream of drm and upstream of bowl during foregut and hindgut patterning and morphogenesis. Involved in cell rearrangement during elongation of the embryonic hindgut. Required to regulate expression of embryonic hindgut patterning genes in order to establish the large intestine and at least some rectum, and to repress small intestine fate. Required for late wingless (wg)-dependent cell fate specification in the dorsal embryonic epidermis. Acts in concert with wg to regulate expression of wg itself and also to regulate wg-target genes. May have a role in ventral epidermal patterning, independent of wg signaling. The chain is Protein lines from Drosophila melanogaster (Fruit fly).